The sequence spans 183 residues: Ribosome-recycling factor (183 aa).

This sequence belongs to the RRF family.

It localises to the cytoplasm. Responsible for the release of ribosomes from messenger RNA at the termination of protein biosynthesis. May increase the efficiency of translation by recycling ribosomes from one round of translation to another. In Clostridium tetani (strain Massachusetts / E88), this protein is Ribosome-recycling factor.